Consider the following 157-residue polypeptide: Small ribosomal subunit protein uS7 (157 aa).

It belongs to the universal ribosomal protein uS7 family. Part of the 30S ribosomal subunit. Contacts proteins S9 and S11.

Its function is as follows. One of the primary rRNA binding proteins, it binds directly to 16S rRNA where it nucleates assembly of the head domain of the 30S subunit. Is located at the subunit interface close to the decoding center, probably blocks exit of the E-site tRNA. In Francisella tularensis subsp. holarctica (strain OSU18), this protein is Small ribosomal subunit protein uS7.